Here is a 565-residue protein sequence, read N- to C-terminus: Phospholipase B-like protein C (565 aa).

Residues 1–21 (MNKIIILISLFLNFLFGYVVC) form the signal peptide. Asparagine 53, asparagine 84, asparagine 118, asparagine 200, asparagine 201, asparagine 211, asparagine 266, asparagine 302, asparagine 406, and asparagine 485 each carry an N-linked (GlcNAc...) asparagine glycan.

The protein belongs to the phospholipase B-like family.

Its subcellular location is the secreted. In terms of biological role, probable phospholipase. The sequence is that of Phospholipase B-like protein C (plbC) from Dictyostelium discoideum (Social amoeba).